The sequence spans 220 residues: Cell division protein SepF (220 aa).

The segment at 33 to 82 (GAARGYARRPREDRFEEEGYIDRAGREYDDRPAPREYDEPPIYRGGYDEP) is disordered. A compositionally biased stretch (basic and acidic residues) spans 52-70 (YIDRAGREYDDRPAPREYD).

This sequence belongs to the SepF family. In terms of assembly, homodimer. Interacts with FtsZ.

The protein resides in the cytoplasm. In terms of biological role, cell division protein that is part of the divisome complex and is recruited early to the Z-ring. Probably stimulates Z-ring formation, perhaps through the cross-linking of FtsZ protofilaments. Its function overlaps with FtsA. This Mycobacterium sp. (strain JLS) protein is Cell division protein SepF.